Consider the following 410-residue polypeptide: Multifunctional CCA protein (410 aa).

Residues G8 and R11 each coordinate ATP. Residues G8 and R11 each coordinate CTP. Mg(2+)-binding residues include D21 and D23. The ATP site is built by R91, R137, and R140. 3 residues coordinate CTP: R91, R137, and R140. The HD domain maps to 225–326 (SGIHTLMTLQ…LNVLKKTDAF (102 aa)).

The protein belongs to the tRNA nucleotidyltransferase/poly(A) polymerase family. Bacterial CCA-adding enzyme type 1 subfamily. In terms of assembly, monomer. Can also form homodimers and oligomers. Mg(2+) serves as cofactor. Requires Ni(2+) as cofactor.

The catalysed reaction is a tRNA precursor + 2 CTP + ATP = a tRNA with a 3' CCA end + 3 diphosphate. It carries out the reaction a tRNA with a 3' CCA end + 2 CTP + ATP = a tRNA with a 3' CCACCA end + 3 diphosphate. Functionally, catalyzes the addition and repair of the essential 3'-terminal CCA sequence in tRNAs without using a nucleic acid template. Adds these three nucleotides in the order of C, C, and A to the tRNA nucleotide-73, using CTP and ATP as substrates and producing inorganic pyrophosphate. tRNA 3'-terminal CCA addition is required both for tRNA processing and repair. Also involved in tRNA surveillance by mediating tandem CCA addition to generate a CCACCA at the 3' terminus of unstable tRNAs. While stable tRNAs receive only 3'-terminal CCA, unstable tRNAs are marked with CCACCA and rapidly degraded. This chain is Multifunctional CCA protein, found in Neisseria gonorrhoeae (strain ATCC 700825 / FA 1090).